Consider the following 130-residue polypeptide: MIQTQNYGTGRRKSSSARVFLRSGNGEIVVNKRSLNEYFGRETSCMIVRQPLELVDMVDKFNIYITVKGGGISGQAGAIRQGITRALIKYNQTLRFELRKAGFVTRDSRQVERKKVGFRKARKRPQFSKR.

The protein belongs to the universal ribosomal protein uS9 family.

The protein is Small ribosomal subunit protein uS9 of Buchnera aphidicola subsp. Acyrthosiphon pisum (strain 5A).